The primary structure comprises 335 residues: UDP-3-O-acylglucosamine N-acyltransferase (335 aa).

His225 functions as the Proton acceptor in the catalytic mechanism.

The protein belongs to the transferase hexapeptide repeat family. LpxD subfamily. As to quaternary structure, homotrimer.

It carries out the reaction a UDP-3-O-[(3R)-3-hydroxyacyl]-alpha-D-glucosamine + a (3R)-hydroxyacyl-[ACP] = a UDP-2-N,3-O-bis[(3R)-3-hydroxyacyl]-alpha-D-glucosamine + holo-[ACP] + H(+). It functions in the pathway bacterial outer membrane biogenesis; LPS lipid A biosynthesis. Functionally, catalyzes the N-acylation of UDP-3-O-acylglucosamine using 3-hydroxyacyl-ACP as the acyl donor. Is involved in the biosynthesis of lipid A, a phosphorylated glycolipid that anchors the lipopolysaccharide to the outer membrane of the cell. This chain is UDP-3-O-acylglucosamine N-acyltransferase, found in Delftia acidovorans (strain DSM 14801 / SPH-1).